The primary structure comprises 294 residues: tRNA pseudouridine synthase B (294 aa).

Aspartate 38 acts as the Nucleophile in catalysis.

Belongs to the pseudouridine synthase TruB family. Type 1 subfamily.

It catalyses the reaction uridine(55) in tRNA = pseudouridine(55) in tRNA. Responsible for synthesis of pseudouridine from uracil-55 in the psi GC loop of transfer RNAs. In Clostridium perfringens (strain ATCC 13124 / DSM 756 / JCM 1290 / NCIMB 6125 / NCTC 8237 / Type A), this protein is tRNA pseudouridine synthase B.